The following is a 538-amino-acid chain: Syncytin-2 (538 aa).

The first 15 residues, 1–15 (MGLLLLLLILTPLLA), serve as a signal peptide directing secretion. Topologically, residues 16 to 478 (AYCHPDFRLL…GWLNWEGTWK (463 aa)) are extracellular. Positions 43-46 (CWLC) match the CXXC motif. 3 disulfides stabilise this stretch: Cys-43-Cys-46, Cys-43-Cys-439, and Cys-431-Cys-438. Asn-146, Asn-177, Asn-220, Asn-241, Asn-247, Asn-312, and Asn-332 each carry an N-linked (GlcNAc...) asparagine glycan. The interval 354–374 (LIPLLVGLGIVGSAGTGIAGI) is fusion peptide. The short motif at 414–430 (LQNRRGLDMLTAAQGGI) is the CKS-17 element. Positions 431 to 439 (CLALDEKCC) match the CX6CC motif. An N-linked (GlcNAc...) asparagine glycan is attached at Asn-443. The helical transmembrane segment at 479 to 499 (WFSWVLPFTGPLVSLLLLLLF) threads the bilayer. Over 500 to 538 (GPCLLNLITQFVSSRLQATKLQMKLNKRVHPRNSQESPF) the chain is Cytoplasmic.

It belongs to the gamma type-C retroviral envelope protein family. HERV class-I FRD env subfamily. In terms of assembly, the surface and transmembrane proteins form a heterodimer. They are attached by non-covalent interactions or by a labile interchain disulfide bond. In terms of processing, specific enzymatic cleavages in vivo yield the mature SU and TM proteins. The CXXC motif is highly conserved across a broad range of retroviral envelope proteins. It is thought to participate in the formation of a labile disulfide bond possibly with the CX6CC motif present in the transmembrane protein.

Its subcellular location is the virion. The protein resides in the cell membrane. Its function is as follows. This endogenous retroviral envelope protein has retained its original fusogenic properties and participates in trophoblast fusion and the formation of a syncytium during placenta morphogenesis. The interaction with MFSD2A is apparently important for this process. Functionally, endogenous envelope proteins may have kept, lost or modified their original function during evolution but this one can still make pseudotypes with MLV, HIV-1 or SIV-1 virions and confer infectivity. Retroviral envelope proteins mediate receptor recognition and membrane fusion during early infection. The surface protein mediates receptor recognition, while the transmembrane protein anchors the envelope heterodimer to the viral membrane through one transmembrane domain. The other hydrophobic domain, called fusion peptide, mediates fusion of the viral membrane with the target cell membrane. The polypeptide is Syncytin-2 (ERVFRD-1) (Callithrix jacchus (White-tufted-ear marmoset)).